The chain runs to 142 residues: Transcriptional regulator MraZ (142 aa).

2 consecutive SpoVT-AbrB domains span residues 5–51 (ASSL…PRNE) and 77–120 (AMDV…DAAT).

The protein belongs to the MraZ family. As to quaternary structure, forms oligomers.

The protein localises to the cytoplasm. It is found in the nucleoid. The protein is Transcriptional regulator MraZ of Polaromonas sp. (strain JS666 / ATCC BAA-500).